A 562-amino-acid polypeptide reads, in one-letter code: Furostanol glycoside 26-O-beta-glucosidase (562 aa).

A chloroplast-targeting transit peptide spans 1-44 (MAAQLGLPLVSCHRGASQAASSSAHLVPGASAIMQAGNRRQKMR). A beta-D-glucoside is bound by residues glutamine 110, histidine 214, and 259–260 (NE). Catalysis depends on glutamate 260, which acts as the Proton donor. Cysteines 279 and 285 form a disulfide. Residues tyrosine 401, glutamate 472, tryptophan 518, 525–526 (EW), and phenylalanine 534 each bind a beta-D-glucoside. Residue glutamate 472 is the Nucleophile of the active site.

The protein belongs to the glycosyl hydrolase 1 family. In terms of assembly, heterodimer. The N-terminus of the larger subunit is blocked and the smaller subunit might be derived from the larger one.

It localises to the plastid. It is found in the chloroplast. The catalysed reaction is protodioscin + H2O = 26-deglucoprotodioscin + D-glucose. Its activity is regulated as follows. Partially inhibited by glucono-1,5-lactone, conduritol beta-epoxide and diosgenin, but not by beta-sitosterol or cholesterol. In terms of biological role, beta-glucosidase involved in saponin metabolism. Highly specific for the cleavage of C-26-bound glucose moiety of furostanol glycosides such as protogracillin and protodioscin. No activity with nuatigenin glycoside. Convers furostanol glycosides to spirostanol glycosides. This is Furostanol glycoside 26-O-beta-glucosidase from Hellenia speciosa (Crepe ginger).